Here is a 479-residue protein sequence, read N- to C-terminus: BURP domain-containing protein 4 (479 aa).

The first 46 residues, 1-46 (MVGKGNECAAARRRFSLRAAAASSSSSSFLPCLLLAAALSAGCCRA), serve as a signal peptide directing secretion. The disordered stretch occupies residues 158-177 (RADGPPKQPATFPASPNGEK). Residues 254-479 (LFLMKKLHPG…PQGYVLWLAN (226 aa)) form the BURP domain. N-linked (GlcNAc...) asparagine glycosylation is present at asparagine 445.

As to expression, expressed in stamen.

The chain is BURP domain-containing protein 4 (BURP4) from Oryza sativa subsp. japonica (Rice).